The sequence spans 188 residues: dCTP deaminase (188 aa).

DCTP is bound by residues 111–116, 135–137, Gln156, Tyr170, Lys179, and Gln180; these read KSTYAR and TLE. The active-site Proton donor/acceptor is the Glu137.

This sequence belongs to the dCTP deaminase family. In terms of assembly, homotrimer.

The catalysed reaction is dCTP + H2O + H(+) = dUTP + NH4(+). It functions in the pathway pyrimidine metabolism; dUMP biosynthesis; dUMP from dCTP (dUTP route): step 1/2. Functionally, catalyzes the deamination of dCTP to dUTP. The chain is dCTP deaminase from Rickettsia bellii (strain OSU 85-389).